We begin with the raw amino-acid sequence, 692 residues long: Junctophilin-2 (692 aa).

The Cytoplasmic portion of the chain corresponds to 1 to 670 (MSGGRFDFDD…EVEVEEVPNT (670 aa)). MORN repeat units follow at residues 14 to 36 (YCGG…KGQG), 38 to 59 (YSGS…SGNT), 60 to 79 (FEGY…TKGR), 82 to 104 (YKGE…NSGA), 106 to 128 (YEGT…DGGT), and 129 to 151 (YQGQ…PYGM). Ser162 and Ser165 each carry phosphoserine. 2 disordered regions span residues 164–190 (SSLR…LPLP) and 246–273 (LSSG…AAPF). MORN repeat units follow at residues 285–307 (YMGE…SGLR) and 308–330 (YEGE…DGHR). The short motif at 345–359 (KRRVLPLKSNKVRQK) is the Bipartite nuclear localization signal element. Residues 439–661 (NSESLLEPRE…KEVAQEAEAE (223 aa)) are disordered. Residues Ser440, Ser442, and Ser462 each carry the phosphoserine modification. Residues 457 to 471 (ERPRESPQLHERETP) are compositionally biased toward basic and acidic residues. Thr470 is subject to Phosphothreonine. Residues 474–487 (EGGPPSPAGTPPQP) are compositionally biased toward pro residues. Ser479 carries the post-translational modification Phosphoserine. The residue at position 483 (Thr483) is a Phosphothreonine. Residues 488-492 (KRPRP) carry the Nuclear localization signal motif. 2 positions are modified to phosphoserine: Ser527 and Ser533. A compositionally biased stretch (acidic residues) spans 573–582 (PLEDEPEPEP). 4 positions are modified to phosphoserine: Ser589, Ser593, Ser604, and Ser609. A compositionally biased stretch (basic and acidic residues) spans 627 to 640 (AEPKAKARKTEARG). The helical; Anchor for type IV membrane protein transmembrane segment at 671–691 (VLICMVILLNIGLAILFVHLL) threads the bilayer.

The protein belongs to the junctophilin family. Interacts with TRPC3. Interacts with BAG5 and HSPA8; the interaction with HSPA8 is increased in the presence of BAG5. Junctophilin-2 N-terminal fragment: Interacts with MEF2C. In terms of processing, proteolytically cleaved by calpain in response to cardiac stress. The major cleavage site takes place at the C-terminus and leads to the release of the Junctophilin-2 N-terminal fragment chain (JP2NT). Phosphorylation on Ser-165, probably by PKC, affects RYR1-mediated calcium ion release, interaction with TRPC3, and skeletal muscle myotubule development.

The protein resides in the cell membrane. It is found in the sarcoplasmic reticulum membrane. Its subcellular location is the endoplasmic reticulum membrane. The protein localises to the nucleus. Membrane-binding protein that provides a structural bridge between the plasma membrane and the sarcoplasmic reticulum and is required for normal excitation-contraction coupling in cardiomyocytes. Provides a structural foundation for functional cross-talk between the cell surface and intracellular Ca(2+) release channels by maintaining the 12-15 nm gap between the sarcolemma and the sarcoplasmic reticulum membranes in the cardiac dyads. Necessary for proper intracellular Ca(2+) signaling in cardiac myocytes via its involvement in ryanodine receptor-mediated calcium ion release. Contributes to the construction of skeletal muscle triad junctions. Functionally, transcription repressor required to safeguard against the deleterious effects of cardiac stress. Generated following cleavage of the Junctophilin-2 chain by calpain in response to cardiac stress in cardiomyocytes. Following cleavage and release from the membrane, translocates to the nucleus, binds DNA and represses expression of genes implicated in cell growth and differentiation, hypertrophy, inflammation and fibrosis. Modifies the transcription profile and thereby attenuates pathological remodeling in response to cardiac stress. Probably acts by competing with MEF2 transcription factors and TATA-binding proteins. The protein is Junctophilin-2 of Rattus norvegicus (Rat).